Reading from the N-terminus, the 364-residue chain is MLKRTPLFAVYERYGAKTIDFGGWELPVQFSSIKEEHEAVRTRAGLFDVSHMGEFVVKGDDSLAFLQKMMTNDVSKLTDGRVQYSLMCYEDGGTVDDLLIYKKADGHYLLVVNAANIEKDFEWLHGHLFGDVELVNISQEIAQLALQGPLAEQVLQKLTNTDLSAIKFFSFQDDININGVKALVSRTGYTGEDGFEIYCRREDAVALWESILEAGKEEGVLPCGLGARDTLRFEATLPLYGQELSKDITPIEAGLGFAVKTNKDADFIGKDVLKKQKEEGTARKLVGIEMIDKGIPRHGYKVFANGEEIGFVTTGTQSPTLKKNIGLALIKTEFTEMDTEVEVEIRGKRLKAKVIATPFYKRAK.

Belongs to the GcvT family. In terms of assembly, the glycine cleavage system is composed of four proteins: P, T, L and H.

The catalysed reaction is N(6)-[(R)-S(8)-aminomethyldihydrolipoyl]-L-lysyl-[protein] + (6S)-5,6,7,8-tetrahydrofolate = N(6)-[(R)-dihydrolipoyl]-L-lysyl-[protein] + (6R)-5,10-methylene-5,6,7,8-tetrahydrofolate + NH4(+). Its function is as follows. The glycine cleavage system catalyzes the degradation of glycine. This is Aminomethyltransferase from Geobacillus sp. (strain WCH70).